A 308-amino-acid chain; its full sequence is General transcription factor IIH subunit 3 (308 aa).

The C4-type zinc-finger motif lies at 268–285; sequence CSVCLSIFCNFSPICTTC.

This sequence belongs to the TFB4 family. As to quaternary structure, part of a TFIID-containing RNA polymerase II pre-initiation complex that is composed of TBP and at least GTF2A1, GTF2A2, GTF2E1, GTF2E2, GTF2F1, GTF2H2, GTF2H3, GTF2H4, GTF2H5, GTF2B, TCEA1, ERCC2, ERCC3, TAF1, TAF2, TAF3, TAF4, TAF5, TAF6, TAF7, TAF8, TAF9, TAF10, TAF11, TAF12 and TAF13. Component of the 7-subunit TFIIH core complex composed of XPB/ERCC3, XPD/ERCC2, GTF2H1, GTF2H2, GTF2H3, GTF2H4 and GTF2H5, which is active in NER. The core complex associates with the 3-subunit CDK-activating kinase (CAK) module composed of CCNH/cyclin H, CDK7 and MNAT1 to form the 10-subunit holoenzyme (holo-TFIIH) active in transcription. Interacts with RARA; the interaction requires prior phosphorylation of RARA on 'Ser-369' which then enhances interaction of RARA with CDK7.

Its subcellular location is the nucleus. Component of the general transcription and DNA repair factor IIH (TFIIH) core complex, which is involved in general and transcription-coupled nucleotide excision repair (NER) of damaged DNA and, when complexed to CAK, in RNA transcription by RNA polymerase II. In NER, TFIIH acts by opening DNA around the lesion to allow the excision of the damaged oligonucleotide and its replacement by a new DNA fragment. In transcription, TFIIH has an essential role in transcription initiation. When the pre-initiation complex (PIC) has been established, TFIIH is required for promoter opening and promoter escape. Phosphorylation of the C-terminal tail (CTD) of the largest subunit of RNA polymerase II by the kinase module CAK controls the initiation of transcription. The chain is General transcription factor IIH subunit 3 (GTF2H3) from Homo sapiens (Human).